A 472-amino-acid polypeptide reads, in one-letter code: Ribulose bisphosphate carboxylase/oxygenase activase, chloroplastic (472 aa).

A chloroplast-targeting transit peptide spans 1–58 (MATAVSTVGAATRAPLNLNGSSAGASVPTSGFLGSSLKKHTNVRFPSSSRTTSMTVKA). ATP is bound at residue 163-170 (GGKGQGKS). The segment at 448–472 (GCTDPEAKNYDPTARSDDGSCTYNL) is disordered. Positions 452–465 (PEAKNYDPTARSDD) are enriched in basic and acidic residues.

The protein belongs to the RuBisCO activase family.

Its subcellular location is the plastid. It is found in the chloroplast stroma. Its function is as follows. Activation of RuBisCO (ribulose-1,5-bisphosphate carboxylase/oxygenase; EC 4.1.1.39) involves the ATP-dependent carboxylation of the epsilon-amino group of lysine leading to a carbamate structure. This is Ribulose bisphosphate carboxylase/oxygenase activase, chloroplastic from Spinacia oleracea (Spinach).